The primary structure comprises 235 residues: Probable carboxylesterase Os04g0669600 (235 aa).

Catalysis depends on charge relay system residues Ser-113, Asp-167, and His-199.

This sequence belongs to the AB hydrolase superfamily. AB hydrolase 2 family.

Possesses carboxylesterase activity in vitro. The polypeptide is Probable carboxylesterase Os04g0669600 (Oryza sativa subsp. japonica (Rice)).